The following is a 255-amino-acid chain: Poxin (255 aa).

The protein belongs to the poxin family. Highly divergent.

It catalyses the reaction 2',3'-cGAMP + H2O = Gp(2'-5')Ap(3') + H(+). Nuclease that cleaves 2',3'-cGAMP. In Bombyx mori (Silk moth), this protein is Poxin.